Consider the following 235-residue polypeptide: Probable 2-phosphosulfolactate phosphatase (235 aa).

Belongs to the ComB family. Mg(2+) is required as a cofactor.

It catalyses the reaction (2R)-O-phospho-3-sulfolactate + H2O = (2R)-3-sulfolactate + phosphate. In Clostridium novyi (strain NT), this protein is Probable 2-phosphosulfolactate phosphatase.